The following is a 334-amino-acid chain: Glycerol-3-phosphate dehydrogenase [NAD(P)+] (334 aa).

Ser-14, Tyr-15, His-35, and Lys-109 together coordinate NADPH. Residues Lys-109, Gly-138, and Thr-140 each coordinate sn-glycerol 3-phosphate. Residue Ala-142 coordinates NADPH. Positions 194, 247, 257, 258, and 259 each coordinate sn-glycerol 3-phosphate. Residue Lys-194 is the Proton acceptor of the active site. Arg-258 contacts NADPH. The NADPH site is built by Val-282 and Glu-284.

It belongs to the NAD-dependent glycerol-3-phosphate dehydrogenase family.

The protein localises to the cytoplasm. It catalyses the reaction sn-glycerol 3-phosphate + NAD(+) = dihydroxyacetone phosphate + NADH + H(+). It carries out the reaction sn-glycerol 3-phosphate + NADP(+) = dihydroxyacetone phosphate + NADPH + H(+). The protein operates within membrane lipid metabolism; glycerophospholipid metabolism. Functionally, catalyzes the reduction of the glycolytic intermediate dihydroxyacetone phosphate (DHAP) to sn-glycerol 3-phosphate (G3P), the key precursor for phospholipid synthesis. This chain is Glycerol-3-phosphate dehydrogenase [NAD(P)+], found in Aeromonas salmonicida (strain A449).